The sequence spans 215 residues: 3-demethoxyubiquinol 3-hydroxylase (215 aa).

E64, E94, H97, E146, E178, and H181 together coordinate Fe cation.

It belongs to the COQ7 family. Requires Fe cation as cofactor.

It localises to the cell membrane. The catalysed reaction is a 5-methoxy-2-methyl-3-(all-trans-polyprenyl)benzene-1,4-diol + AH2 + O2 = a 3-demethylubiquinol + A + H2O. It functions in the pathway cofactor biosynthesis; ubiquinone biosynthesis. In terms of biological role, catalyzes the hydroxylation of 2-nonaprenyl-3-methyl-6-methoxy-1,4-benzoquinol during ubiquinone biosynthesis. This chain is 3-demethoxyubiquinol 3-hydroxylase, found in Pseudomonas putida (strain W619).